Here is a 263-residue protein sequence, read N- to C-terminus: Granzyme K (263 aa).

A signal peptide spans 1–21; the sequence is MRFSSWALVSLVAGVYMSSEC. A propeptide spans 22–25 (activation peptide); it reads FHTE. The Peptidase S1 domain maps to 26–258; it reads IIGGREVQPH…YQTWIKSKLA (233 aa). Cys-51 and Cys-67 are oxidised to a cystine. Catalysis depends on charge relay system residues His-66 and Asp-115. Intrachain disulfides connect Cys-148–Cys-219, Cys-180–Cys-198, and Cys-209–Cys-233. The Charge relay system role is filled by Ser-213.

Belongs to the peptidase S1 family. Granzyme subfamily.

Its subcellular location is the cytoplasmic granule. The chain is Granzyme K (Gzmk) from Mus musculus (Mouse).